We begin with the raw amino-acid sequence, 158 residues long: Phosphopantetheine adenylyltransferase (158 aa).

Ser-9 is a substrate binding site. ATP contacts are provided by residues 9–10 and His-17; that span reads SF. Substrate contacts are provided by Lys-41, Val-73, and Lys-87. Residues 88-90, Glu-98, and 122-128 each bind ATP; these read GLR and YSFVSSS.

The protein belongs to the bacterial CoaD family. Homohexamer. The cofactor is Mg(2+).

It localises to the cytoplasm. It carries out the reaction (R)-4'-phosphopantetheine + ATP + H(+) = 3'-dephospho-CoA + diphosphate. It participates in cofactor biosynthesis; coenzyme A biosynthesis; CoA from (R)-pantothenate: step 4/5. Reversibly transfers an adenylyl group from ATP to 4'-phosphopantetheine, yielding dephospho-CoA (dPCoA) and pyrophosphate. This is Phosphopantetheine adenylyltransferase from Mycolicibacterium smegmatis (strain ATCC 700084 / mc(2)155) (Mycobacterium smegmatis).